The primary structure comprises 91 residues: Probable Fe(2+)-trafficking protein (91 aa).

This sequence belongs to the Fe(2+)-trafficking protein family.

Functionally, could be a mediator in iron transactions between iron acquisition and iron-requiring processes, such as synthesis and/or repair of Fe-S clusters in biosynthetic enzymes. In Burkholderia cenocepacia (strain ATCC BAA-245 / DSM 16553 / LMG 16656 / NCTC 13227 / J2315 / CF5610) (Burkholderia cepacia (strain J2315)), this protein is Probable Fe(2+)-trafficking protein.